A 116-amino-acid polypeptide reads, in one-letter code: MKTIIVFLSLLVLATKFGDANEGVNQEQMKEVIQNEFREDFLNEMAAMSLLQQLEAIESTLLEKEADRNSRQKRCNGNNVPCGPDHPPCCSGLSCEKTFGYGWWYKSPYCVRPSKG.

The first 20 residues, 1–20 (MKTIIVFLSLLVLATKFGDA), serve as a signal peptide directing secretion. Residues 21 to 74 (NEGVNQEQMKEVIQNEFREDFLNEMAAMSLLQQLEAIESTLLEKEADRNSRQKR) constitute a propeptide that is removed on maturation. Disulfide bonds link cysteine 75–cysteine 90, cysteine 82–cysteine 95, and cysteine 89–cysteine 110.

This sequence belongs to the neurotoxin 14 (magi-1) family. 06 (ICK-Trit) subfamily. In terms of tissue distribution, expressed by the venom gland.

It is found in the secreted. Its function is as follows. Ion channel inhibitor. In Trittame loki (Brush-footed trapdoor spider), this protein is U16-barytoxin-Tl1d.